The primary structure comprises 474 residues: Glutamate--tRNA ligase (474 aa).

The short motif at 9-19 is the 'HIGH' region element; that stretch reads PSPTGYLHVGG. The 'KMSKS' region signature appears at 240-244; that stretch reads KLSKR. Lys-243 contacts ATP.

This sequence belongs to the class-I aminoacyl-tRNA synthetase family. Glutamate--tRNA ligase type 1 subfamily. As to quaternary structure, monomer.

The protein localises to the cytoplasm. The enzyme catalyses tRNA(Glu) + L-glutamate + ATP = L-glutamyl-tRNA(Glu) + AMP + diphosphate. Catalyzes the attachment of glutamate to tRNA(Glu) in a two-step reaction: glutamate is first activated by ATP to form Glu-AMP and then transferred to the acceptor end of tRNA(Glu). This chain is Glutamate--tRNA ligase, found in Vibrio cholerae serotype O1 (strain ATCC 39315 / El Tor Inaba N16961).